The sequence spans 604 residues: FAD-linked oxidoreductase easE (604 aa).

Positions 1–25 (MQFLLWSTGLVALLSWLIYTQETQS) are cleaved as a signal peptide. Residues asparagine 47, asparagine 70, asparagine 106, and asparagine 196 are each glycosylated (N-linked (GlcNAc...) asparagine). One can recognise an FAD-binding PCMH-type domain in the interval 125–308 (QGRIPLFTVG…TRATMRVFPD (184 aa)).

Belongs to the oxygen-dependent FAD-linked oxidoreductase family. Requires FAD as cofactor.

It functions in the pathway alkaloid biosynthesis; ergot alkaloid biosynthesis. FAD-linked oxidoreductase; part of the gene cluster that mediates the biosynthesis of fungal ergot alkaloid. DmaW catalyzes the first step of ergot alkaloid biosynthesis by condensing dimethylallyl diphosphate (DMAP) and tryptophan to form 4-dimethylallyl-L-tryptophan. The second step is catalyzed by the methyltransferase easF that methylates 4-dimethylallyl-L-tryptophan in the presence of S-adenosyl-L-methionine, resulting in the formation of 4-dimethylallyl-L-abrine. The catalase easC and the FAD-dependent oxidoreductase easE then transform 4-dimethylallyl-L-abrine to chanoclavine-I which is further oxidized by easD in the presence of NAD(+), resulting in the formation of chanoclavine-I aldehyde. Chanoclavine-I aldehyde is the precursor of ergoamides and ergopeptines in Clavicipitaceae, and clavine-type alcaloids such as fumiclavine in Trichocomaceae. However, the metabolites downstream of chanoclavine-I aldehyde in Arthrodermataceae have not been identified yet. This Trichophyton verrucosum (strain HKI 0517) protein is FAD-linked oxidoreductase easE.